A 200-amino-acid polypeptide reads, in one-letter code: Probable fatty acid desaturase MIMI_L630 (200 aa).

2 helical membrane-spanning segments follow: residues 9–29 (FIQI…YHWI) and 79–99 (IGPL…FIMI).

This sequence belongs to the fatty acid desaturase CarF family.

The protein resides in the membrane. The sequence is that of Probable fatty acid desaturase MIMI_L630 from Acanthamoeba polyphaga mimivirus (APMV).